A 413-amino-acid polypeptide reads, in one-letter code: uncharacterized protein (413 aa).

4 consecutive transmembrane segments (helical) span residues 22–42 (VLLV…TLIL), 270–290 (IIYV…ISIC), 312–332 (ILIQ…GNLI), and 379–399 (LIII…YPIY).

This sequence belongs to the ABC-4 integral membrane protein family. LolC/E subfamily.

Its subcellular location is the cell membrane. This is an uncharacterized protein from Buchnera aphidicola subsp. Schizaphis graminum (strain Sg).